The sequence spans 64 residues: Prokaryotic ubiquitin-like protein Pup (64 aa).

Positions 1–36 are disordered; sequence MAQEQTKRGGGGGDDEDVTGTTAAGQERRKKLAQDT. An ARC ATPase binding region spans residues 21–58; it reads TTAAGQERRKKLAQDTDDLLDEIDDVLEENAEDFVRAY. Residues 26–52 are a coiled coil; sequence QERRKKLAQDTDDLLDEIDDVLEENAE. The residue at position 64 (Q64) is a Deamidated glutamine. Residue Q64 forms an Isoglutamyl lysine isopeptide (Gln-Lys) (interchain with K-? in acceptor proteins) linkage.

This sequence belongs to the prokaryotic ubiquitin-like protein family. Strongly interacts with the proteasome-associated ATPase ARC through a hydrophobic interface; the interacting region of Pup lies in its C-terminal half. There is one Pup binding site per ARC hexamer ring. Is modified by deamidation of its C-terminal glutamine to glutamate by the deamidase Dop, a prerequisite to the subsequent pupylation process.

It functions in the pathway protein degradation; proteasomal Pup-dependent pathway. In terms of biological role, protein modifier that is covalently attached to lysine residues of substrate proteins, thereby targeting them for proteasomal degradation. The tagging system is termed pupylation. This Mycobacterium ulcerans (strain Agy99) protein is Prokaryotic ubiquitin-like protein Pup.